We begin with the raw amino-acid sequence, 1025 residues long: Kinesin-like protein KIN-14P (1025 aa).

2 disordered regions span residues 1 to 87 (MNPM…MHHG) and 263 to 286 (YSQI…NEEE). Over residues 15-28 (STPRSPFSPFSPLS) the composition is skewed to low complexity. A compositionally biased stretch (basic and acidic residues) spans 29 to 41 (VDDRHRNHADTKT). Residues 42 to 53 (PRSPFSPFSPLS) show a composition bias toward low complexity. Over residues 65–75 (KFQQALASSGQ) the composition is skewed to polar residues. A coiled-coil region spans residues 203 to 425 (HEIATQQLRQ…REMEKKSESN (223 aa)). The segment covering 270-286 (TKTEKSKWEEQKKNEEE) has biased composition (basic and acidic residues). The region spanning 509–838 (NIRVFCRVRP…LKFAERVSGV (330 aa)) is the Kinesin motor domain. 593 to 600 (GQTGSGKT) is a binding site for ATP. Positions 847 to 879 (KEGKDVRDLMEQLASLKDTIARKDEEIERLQHQ) form a coiled coil. Disordered regions lie at residues 881–926 (QRLQ…SAEA), 939–977 (AASM…RPLD), and 994–1025 (TGLT…KRWA). Composition is skewed to polar residues over residues 901–913 (SDTG…SRYS) and 939–948 (AASMGTQGSI). Positions 950–962 (VTKRPPRISDRAK) are enriched in basic and acidic residues. Composition is skewed to low complexity over residues 963–974 (SVTAKSSTSVTR) and 998–1016 (SSSK…STSS).

Belongs to the TRAFAC class myosin-kinesin ATPase superfamily. Kinesin family. KIN-14 subfamily.

The protein is Kinesin-like protein KIN-14P of Arabidopsis thaliana (Mouse-ear cress).